A 565-amino-acid polypeptide reads, in one-letter code: Urocanate hydratase (565 aa).

Residues 61-62 (GG), glutamine 139, 185-187 (GMG), glutamate 205, arginine 210, 251-252 (NA), 272-276 (QTSAH), 282-283 (YL), and tyrosine 331 each bind NAD(+). Residue cysteine 419 is part of the active site. Residues 453 to 472 (LDSGSVASPNRETESMRDGS) are disordered. The segment covering 463–472 (RETESMRDGS) has biased composition (basic and acidic residues). Glycine 501 contributes to the NAD(+) binding site.

Belongs to the urocanase family. The cofactor is NAD(+).

It is found in the cytoplasm. It catalyses the reaction 4-imidazolone-5-propanoate = trans-urocanate + H2O. It functions in the pathway amino-acid degradation; L-histidine degradation into L-glutamate; N-formimidoyl-L-glutamate from L-histidine: step 2/3. Functionally, catalyzes the conversion of urocanate to 4-imidazolone-5-propionate. This is Urocanate hydratase from Pseudomonas syringae pv. syringae (strain B728a).